The chain runs to 197 residues: dCTP deaminase (197 aa).

Residue 105 to 110 (RSSIAR) coordinates dCTP. Residue E133 is the Proton donor/acceptor of the active site. Residues Y166 and Q177 each contribute to the dCTP site. Positions 172 to 197 (NKYAGQKDPKPSRLAEELSLEQLRGR) are disordered. Residues 176 to 187 (GQKDPKPSRLAE) are compositionally biased toward basic and acidic residues.

The protein belongs to the dCTP deaminase family. Homotrimer.

It catalyses the reaction dCTP + H2O + H(+) = dUTP + NH4(+). It functions in the pathway pyrimidine metabolism; dUMP biosynthesis; dUMP from dCTP (dUTP route): step 1/2. Functionally, catalyzes the deamination of dCTP to dUTP. The sequence is that of dCTP deaminase from Thermomicrobium roseum (strain ATCC 27502 / DSM 5159 / P-2).